We begin with the raw amino-acid sequence, 210 residues long: Prolactin (210 aa).

Positions 1 to 23 are cleaved as a signal peptide; that stretch reads MARRSQGTKLHLAVLCLVVSCHA. 2 disulfides stabilise this stretch: Cys-69–Cys-183 and Cys-200–Cys-210.

This sequence belongs to the somatotropin/prolactin family.

It is found in the secreted. The sequence is that of Prolactin (prl) from Oncorhynchus mykiss (Rainbow trout).